Consider the following 84-residue polypeptide: uncharacterized protein (84 aa).

Positions 5–31 form a coiled coil; that stretch reads KIQEIINELDNLMNRERKYIELVATVE.

This is an uncharacterized protein from Methanocaldococcus jannaschii (strain ATCC 43067 / DSM 2661 / JAL-1 / JCM 10045 / NBRC 100440) (Methanococcus jannaschii).